Here is a 273-residue protein sequence, read N- to C-terminus: Large ribosomal subunit protein uL2c (273 aa).

Positions 1-31 (MAIHLSKTSSPSTRNGAVNSQVKSNSRNRLI) are enriched in polar residues. Disordered regions lie at residues 1-53 (MAIH…GHRG) and 222-273 (MNPV…RRSK).

The protein belongs to the universal ribosomal protein uL2 family. Part of the 50S ribosomal subunit.

The protein localises to the plastid. It is found in the chloroplast. The sequence is that of Large ribosomal subunit protein uL2c (rpl2) from Pisum sativum (Garden pea).